The sequence spans 379 residues: PqqA peptide cyclase (379 aa).

The Radical SAM core domain occupies 8–220; it reads LPAPIGLLAE…IRVVEEARER (213 aa). 3 residues coordinate [4Fe-4S] cluster: Cys-22, Cys-26, and Cys-29.

This sequence belongs to the radical SAM superfamily. PqqE family. Interacts with PqqD. The interaction is necessary for activity of PqqE. [4Fe-4S] cluster is required as a cofactor.

It catalyses the reaction [PQQ precursor protein] + S-adenosyl-L-methionine = E-Y cross-linked-[PQQ precursor protein] + 5'-deoxyadenosine + L-methionine + H(+). The protein operates within cofactor biosynthesis; pyrroloquinoline quinone biosynthesis. In terms of biological role, catalyzes the cross-linking of a glutamate residue and a tyrosine residue in the PqqA protein as part of the biosynthesis of pyrroloquinoline quinone (PQQ). The sequence is that of PqqA peptide cyclase from Methylobacterium nodulans (strain LMG 21967 / CNCM I-2342 / ORS 2060).